We begin with the raw amino-acid sequence, 925 residues long: Eukaryotic translation initiation factor 3 subunit A (925 aa).

Residues 108-127 are disordered; that stretch reads QAQTDAKEESNKDQAEEDLE. The segment covering 112-121 has biased composition (basic and acidic residues); it reads DAKEESNKDQ. The 175-residue stretch at 324 to 498 folds into the PCI domain; the sequence is FKFYSSQFVL…DTVSFAQDPF (175 aa). Disordered regions lie at residues 509 to 544 and 839 to 925; these read PESSTSDEAKNSESEEETSQETHADEEQNEQVFTRN and KEAL…AGRG. Coiled-coil stretches lie at residues 534 to 666 and 785 to 885; these read EEQN…MKKL and SVIA…SSRS. Residues 839-880 show a composition bias toward basic and acidic residues; that stretch reads KEALAKEEELAKRRAERERINKERDEIARKQREIEELLEKKN. Positions 916–925 are enriched in basic residues; sequence RLKRMNAGRG.

It belongs to the eIF-3 subunit A family. In terms of assembly, component of the eukaryotic translation initiation factor 3 (eIF-3) complex.

The protein localises to the cytoplasm. Its function is as follows. RNA-binding component of the eukaryotic translation initiation factor 3 (eIF-3) complex, which is involved in protein synthesis of a specialized repertoire of mRNAs and, together with other initiation factors, stimulates binding of mRNA and methionyl-tRNAi to the 40S ribosome. The eIF-3 complex specifically targets and initiates translation of a subset of mRNAs involved in cell proliferation. The polypeptide is Eukaryotic translation initiation factor 3 subunit A (Kluyveromyces lactis (strain ATCC 8585 / CBS 2359 / DSM 70799 / NBRC 1267 / NRRL Y-1140 / WM37) (Yeast)).